The following is a 124-amino-acid chain: Immunoglobulin lambda variable 5-52 (124 aa).

The first 19 residues, 1–19 (MAWTLLLLVLLSHCTGSLS), serve as a signal peptide directing secretion. A framework-1 region spans residues 20 to 44 (QPVLTQPSSHSASSGASVRLTCMLS). One can recognise an Ig-like domain in the interval 21 to 124 (PVLTQPSSHS…CGTWHSNSKT (104 aa)). A disulfide bridge links C41 with C115. The complementarity-determining-1 stretch occupies residues 45–53 (SGFSVGDFW). The framework-2 stretch occupies residues 54 to 70 (IRWYQQKPGNPPRYLLY). Residues 71–77 (YHSDSNK) form a complementarity-determining-2 region. Residues 78-115 (GQGSGVPSRFSGSNDASANAGILRISGLQPEDEADYYC) form a framework-3 region. The complementarity-determining-3 stretch occupies residues 116–124 (GTWHSNSKT).

As to quaternary structure, immunoglobulins are composed of two identical heavy chains and two identical light chains; disulfide-linked.

It localises to the secreted. It is found in the cell membrane. Its function is as follows. V region of the variable domain of immunoglobulin light chains that participates in the antigen recognition. Immunoglobulins, also known as antibodies, are membrane-bound or secreted glycoproteins produced by B lymphocytes. In the recognition phase of humoral immunity, the membrane-bound immunoglobulins serve as receptors which, upon binding of a specific antigen, trigger the clonal expansion and differentiation of B lymphocytes into immunoglobulins-secreting plasma cells. Secreted immunoglobulins mediate the effector phase of humoral immunity, which results in the elimination of bound antigens. The antigen binding site is formed by the variable domain of one heavy chain, together with that of its associated light chain. Thus, each immunoglobulin has two antigen binding sites with remarkable affinity for a particular antigen. The variable domains are assembled by a process called V-(D)-J rearrangement and can then be subjected to somatic hypermutations which, after exposure to antigen and selection, allow affinity maturation for a particular antigen. The polypeptide is Immunoglobulin lambda variable 5-52 (Homo sapiens (Human)).